The sequence spans 378 residues: MHKWITFPHREGTCSRQAHADFPEQAIYEREAGRSGFFGPAAHFHHQHAPTGWSEWEGELRPRAFNFNHVEGVNALSPWQVPLLLHNHEVKVRVWKLEQAMPALARNADGDELLFIHQGKADLYCDYGHMVVSEGDYALIPRSTNWRLEPIEPLFILMIENTDAAYALPEKGLVGNHAVFDPAVLDVPSINDQFRAQYSEQQTQVQVKRHGQLSTITFPFNPLDAVGWHGDLSVVRLNWRDIRPLMSHRYHLPPSAHTTFVGQGFVVCTFVPRPIESDPGALKVPFYHNNDDYDEVLFYHAGDFFSRDNIEAGMVTFHPAGFTHGPHPKAFQAGLEYRKKFTDEVAVMIDTRHALQFSDAAQQVENRQYVYSWQSKVE.

3 residues coordinate Fe cation: H288, D294, and H324.

It belongs to the homogentisate dioxygenase family. Fe cation is required as a cofactor.

The protein is Putative dioxygenase VC_1345 of Vibrio cholerae serotype O1 (strain ATCC 39315 / El Tor Inaba N16961).